A 779-amino-acid chain; its full sequence is Subtilisin-like protease SBT3.18 (779 aa).

The first 21 residues, 1–21 (MYFWVMFFTLMIKVKLYITNG), serve as a signal peptide directing secretion. A propeptide spans 22–109 (DIFQNRPTVY…VFKSKSLKLH (88 aa)) (activation peptide). An Inhibitor I9 domain is found at 30 to 109 (VYVVYLGANR…VFKSKSLKLH (80 aa)). A glycan (N-linked (GlcNAc...) asparagine) is linked at N84. A Peptidase S8 domain is found at 113 to 621 (SWDFLGLAVD…AGHINPLKAM (509 aa)). Catalysis depends on charge relay system residues D144 and H221. Residues N236 and N406 are each glycosylated (N-linked (GlcNAc...) asparagine). The active-site Charge relay system is the S553.

Belongs to the peptidase S8 family.

The protein localises to the secreted. This chain is Subtilisin-like protease SBT3.18, found in Arabidopsis thaliana (Mouse-ear cress).